Here is a 344-residue protein sequence, read N- to C-terminus: Arginine N-succinyltransferase (344 aa).

Succinyl-CoA is bound at residue Leu-125. The Proton donor role is filled by His-229.

It belongs to the arginine N-succinyltransferase family.

The catalysed reaction is succinyl-CoA + L-arginine = N(2)-succinyl-L-arginine + CoA + H(+). It participates in amino-acid degradation; L-arginine degradation via AST pathway; L-glutamate and succinate from L-arginine: step 1/5. Its function is as follows. Catalyzes the transfer of succinyl-CoA to arginine to produce N(2)-succinylarginine. The chain is Arginine N-succinyltransferase from Salmonella arizonae (strain ATCC BAA-731 / CDC346-86 / RSK2980).